Here is a 544-residue protein sequence, read N- to C-terminus: Pentatricopeptide repeat-containing protein At1g66345, mitochondrial (544 aa).

A mitochondrion-targeting transit peptide spans 1–116 (MASALRRLVE…RNLRHGIKSY (116 aa)). PPR repeat units follow at residues 163 to 197 (TPLVFDLLVQCYAKIRYLELGFDVFKRLCDCGFTL), 198 to 232 (SVITLNTLIHYSSKSKIDDLVWRIYECAIDKRIYP), 233 to 267 (NEITIRIMIQVLCKEGRLKEVVDLLDRICGKRCLP), 268 to 302 (SVIVNTSLVFRVLEEMRIEESMSLLKRLLMKNMVV), 303 to 337 (DTIGYSIVVYAKAKEGDLVSARKVFDEMLQRGFSA), 338 to 372 (NSFVYTVFVRVCCEKGDVKEAERLLSEMEESGVSP), 373 to 407 (YDETFNCLIGGFARFGWEEKGLEYCEVMVTRGLMP), 408 to 442 (SCSAFNEMVKSVSKIENVNRANEILTKSIDKGFVP), 443 to 477 (DEHTYSHLIRGFIEGNDIDQALKLFYEMEYRKMSP), 478 to 512 (GFEVFRSLIVGLCTCGKVEAGEKYLKIMKKRLIEP), and 513 to 544 (NADIYDALIKAFQKIGDKTNADRVYNEMISVR).

This sequence belongs to the PPR family. P subfamily.

It is found in the mitochondrion. The polypeptide is Pentatricopeptide repeat-containing protein At1g66345, mitochondrial (Arabidopsis thaliana (Mouse-ear cress)).